Reading from the N-terminus, the 210-residue chain is Protein GrpE (210 aa).

Residues 1–12 are compositionally biased toward basic and acidic residues; that stretch reads MSDQAKDERAPS. Disordered regions lie at residues 1–26 and 191–210; these read MSDQ…RTEG and IAAE…EKDA.

Belongs to the GrpE family. Homodimer.

It is found in the cytoplasm. Participates actively in the response to hyperosmotic and heat shock by preventing the aggregation of stress-denatured proteins, in association with DnaK and GrpE. It is the nucleotide exchange factor for DnaK and may function as a thermosensor. Unfolded proteins bind initially to DnaJ; upon interaction with the DnaJ-bound protein, DnaK hydrolyzes its bound ATP, resulting in the formation of a stable complex. GrpE releases ADP from DnaK; ATP binding to DnaK triggers the release of the substrate protein, thus completing the reaction cycle. Several rounds of ATP-dependent interactions between DnaJ, DnaK and GrpE are required for fully efficient folding. This is Protein GrpE from Mesorhizobium japonicum (strain LMG 29417 / CECT 9101 / MAFF 303099) (Mesorhizobium loti (strain MAFF 303099)).